Here is a 98-residue protein sequence, read N- to C-terminus: Cell cycle protein GpsB (98 aa).

The stretch at 34–71 (LDIVIKDYEAFQQELDELRQENARLKRQVEELQKRPTT) forms a coiled coil.

This sequence belongs to the GpsB family. As to quaternary structure, forms polymers through the coiled coil domains. Interacts with PBP1, MreC and EzrA.

The protein localises to the cytoplasm. Divisome component that associates with the complex late in its assembly, after the Z-ring is formed, and is dependent on DivIC and PBP2B for its recruitment to the divisome. Together with EzrA, is a key component of the system that regulates PBP1 localization during cell cycle progression. Its main role could be the removal of PBP1 from the cell pole after pole maturation is completed. Also contributes to the recruitment of PBP1 to the division complex. Not essential for septum formation. This chain is Cell cycle protein GpsB, found in Geobacillus thermodenitrificans (strain NG80-2).